The following is a 118-amino-acid chain: Small ribosomal subunit protein uS13 (118 aa).

Positions 91 to 118 are disordered; it reads HRRSLPVRGQRTKTNARTRKGPRKPIRK.

Belongs to the universal ribosomal protein uS13 family. In terms of assembly, part of the 30S ribosomal subunit. Forms a loose heterodimer with protein S19. Forms two bridges to the 50S subunit in the 70S ribosome.

Located at the top of the head of the 30S subunit, it contacts several helices of the 16S rRNA. In the 70S ribosome it contacts the 23S rRNA (bridge B1a) and protein L5 of the 50S subunit (bridge B1b), connecting the 2 subunits; these bridges are implicated in subunit movement. Contacts the tRNAs in the A and P-sites. The polypeptide is Small ribosomal subunit protein uS13 (Marinomonas sp. (strain MWYL1)).